We begin with the raw amino-acid sequence, 325 residues long: Beta-ketoacyl-[acyl-carrier-protein] synthase III (325 aa).

Catalysis depends on residues Cys119 and His252. The ACP-binding stretch occupies residues 253 to 257; it reads QANIR. Asn282 is an active-site residue.

It belongs to the thiolase-like superfamily. FabH family. As to quaternary structure, homodimer.

It is found in the cytoplasm. It carries out the reaction malonyl-[ACP] + acetyl-CoA + H(+) = 3-oxobutanoyl-[ACP] + CO2 + CoA. Its pathway is lipid metabolism; fatty acid biosynthesis. In terms of biological role, catalyzes the condensation reaction of fatty acid synthesis by the addition to an acyl acceptor of two carbons from malonyl-ACP. Catalyzes the first condensation reaction which initiates fatty acid synthesis and may therefore play a role in governing the total rate of fatty acid production. Possesses both acetoacetyl-ACP synthase and acetyl transacylase activities. Its substrate specificity determines the biosynthesis of branched-chain and/or straight-chain of fatty acids. The chain is Beta-ketoacyl-[acyl-carrier-protein] synthase III from Paracidovorax citrulli (strain AAC00-1) (Acidovorax citrulli).